The sequence spans 369 residues: Chorismate synthase (369 aa).

NADP(+)-binding residues include R48 and R54. Residues 125–127 (RSS), 238–239 (NA), G283, 298–302 (KPTSS), and R324 contribute to the FMN site.

It belongs to the chorismate synthase family. As to quaternary structure, homotetramer. It depends on FMNH2 as a cofactor.

The enzyme catalyses 5-O-(1-carboxyvinyl)-3-phosphoshikimate = chorismate + phosphate. The protein operates within metabolic intermediate biosynthesis; chorismate biosynthesis; chorismate from D-erythrose 4-phosphate and phosphoenolpyruvate: step 7/7. Functionally, catalyzes the anti-1,4-elimination of the C-3 phosphate and the C-6 proR hydrogen from 5-enolpyruvylshikimate-3-phosphate (EPSP) to yield chorismate, which is the branch point compound that serves as the starting substrate for the three terminal pathways of aromatic amino acid biosynthesis. This reaction introduces a second double bond into the aromatic ring system. The polypeptide is Chorismate synthase (Acidiphilium cryptum (strain JF-5)).